A 583-amino-acid polypeptide reads, in one-letter code: Isocitrate dehydrogenase kinase/phosphatase (583 aa).

ATP-binding positions include 315 to 321 and K336; that span reads APGIRGM. D371 is an active-site residue.

It belongs to the AceK family.

The protein resides in the cytoplasm. The catalysed reaction is L-seryl-[isocitrate dehydrogenase] + ATP = O-phospho-L-seryl-[isocitrate dehydrogenase] + ADP + H(+). Bifunctional enzyme which can phosphorylate or dephosphorylate isocitrate dehydrogenase (IDH) on a specific serine residue. This is a regulatory mechanism which enables bacteria to bypass the Krebs cycle via the glyoxylate shunt in response to the source of carbon. When bacteria are grown on glucose, IDH is fully active and unphosphorylated, but when grown on acetate or ethanol, the activity of IDH declines drastically concomitant with its phosphorylation. The chain is Isocitrate dehydrogenase kinase/phosphatase from Salmonella paratyphi C (strain RKS4594).